We begin with the raw amino-acid sequence, 230 residues long: Flagellar L-ring protein (230 aa).

Residues 1–18 (MNRLNIAVSCLATALLFG) form the signal peptide. Residue cysteine 19 is the site of N-palmitoyl cysteine attachment. The S-diacylglycerol cysteine moiety is linked to residue cysteine 19.

This sequence belongs to the FlgH family. In terms of assembly, the basal body constitutes a major portion of the flagellar organelle and consists of four rings (L,P,S, and M) mounted on a central rod.

Its subcellular location is the cell outer membrane. It localises to the bacterial flagellum basal body. In terms of biological role, assembles around the rod to form the L-ring and probably protects the motor/basal body from shearing forces during rotation. This Legionella pneumophila (strain Corby) protein is Flagellar L-ring protein.